The following is a 155-amino-acid chain: UPF0178 protein Clos_2709 (155 aa).

This sequence belongs to the UPF0178 family.

In Alkaliphilus oremlandii (strain OhILAs) (Clostridium oremlandii (strain OhILAs)), this protein is UPF0178 protein Clos_2709.